A 154-amino-acid chain; its full sequence is MLKHIDLYTDGSCLGNPGPGGYGAVLVYGDHRKEISGGFRLTTNNRMELMAAIMGLRTLNAACQVRLTTDSQYVRQGITQWIIGWKKKGWMTSNRQPVKNVDLWKELDAEVARHQIEWLWVKGHSGHPENERCDELARDAASGKELAEDTGYQP.

One can recognise an RNase H type-1 domain in the interval 1 to 142; that stretch reads MLKHIDLYTD…CDELARDAAS (142 aa). Mg(2+) is bound by residues D10, E48, D70, and D134. Residues 126-147 show a composition bias toward basic and acidic residues; the sequence is GHPENERCDELARDAASGKELA. The tract at residues 126 to 154 is disordered; the sequence is GHPENERCDELARDAASGKELAEDTGYQP.

The protein belongs to the RNase H family. As to quaternary structure, monomer. The cofactor is Mg(2+).

The protein localises to the cytoplasm. It catalyses the reaction Endonucleolytic cleavage to 5'-phosphomonoester.. Its function is as follows. Endonuclease that specifically degrades the RNA of RNA-DNA hybrids. In Aeromonas salmonicida (strain A449), this protein is Ribonuclease H.